Here is a 59-residue protein sequence, read N- to C-terminus: Large ribosomal subunit protein uL30 (59 aa).

This sequence belongs to the universal ribosomal protein uL30 family. Part of the 50S ribosomal subunit.

This is Large ribosomal subunit protein uL30 from Aliivibrio salmonicida (strain LFI1238) (Vibrio salmonicida (strain LFI1238)).